The chain runs to 171 residues: PIDD1 alternative open reading frame protein (171 aa).

Disordered stretches follow at residues methionine 1 to glycine 22 and isoleucine 76 to alanine 156. Residues glycine 84 to proline 99 are compositionally biased toward low complexity.

As to quaternary structure, interacts with calpain-2 catalytic subunit CAPN2. Post-translationally, cleaved in vitro following UV irradiation to induce caspase-mediated apoptosis and this cleavage is inhibited by a broad-spectrum caspase inhibitor.

Its subcellular location is the cytoplasm. It is found in the cytoskeleton. The protein is PIDD1 alternative open reading frame protein of Homo sapiens (Human).